A 246-amino-acid chain; its full sequence is tRNA pseudouridine synthase A (246 aa).

Catalysis depends on Asp54, which acts as the Nucleophile. Tyr112 contacts substrate.

It belongs to the tRNA pseudouridine synthase TruA family. Homodimer.

It carries out the reaction uridine(38/39/40) in tRNA = pseudouridine(38/39/40) in tRNA. Functionally, formation of pseudouridine at positions 38, 39 and 40 in the anticodon stem and loop of transfer RNAs. The chain is tRNA pseudouridine synthase A from Moorella thermoacetica (strain ATCC 39073 / JCM 9320).